The sequence spans 959 residues: Translation initiation factor IF-2 (959 aa).

Residues 1-10 (MSDKTNDDKT) show a composition bias toward basic and acidic residues. The tract at residues 1–374 (MSDKTNDDKT…SQMQETREKI (374 aa)) is disordered. Residues 27-37 (EQSTVRQNFSH) are compositionally biased toward polar residues. Composition is skewed to low complexity over residues 63–118 (AAAA…VTKP) and 128–138 (QRPGGQQAQRP). 2 stretches are compositionally biased toward basic and acidic residues: residues 154-225 (SEMD…EAAK) and 232-241 (ARSERRDDAR). Residues 246 to 284 (GARPQQAGRPQGGRPQPAGRPQQGSPRPAPIIADAAPIA) show a composition bias toward low complexity. A compositionally biased stretch (basic and acidic residues) spans 318–333 (PEVRAPKVVKGEDDRR). Residues 457–626 (SRPPVVTIMG…LLQAEMLDLK (170 aa)) form the tr-type G domain. Positions 466-473 (GHVDHGKT) are G1. 466–473 (GHVDHGKT) contacts GTP. A G2 region spans residues 491 to 495 (GITQH). The tract at residues 512–515 (DTPG) is G3. GTP is bound by residues 512 to 516 (DTPGH) and 566 to 569 (NKID). The segment at 566 to 569 (NKID) is G4. Positions 602-604 (SAK) are G5.

It belongs to the TRAFAC class translation factor GTPase superfamily. Classic translation factor GTPase family. IF-2 subfamily.

Its subcellular location is the cytoplasm. One of the essential components for the initiation of protein synthesis. Protects formylmethionyl-tRNA from spontaneous hydrolysis and promotes its binding to the 30S ribosomal subunits. Also involved in the hydrolysis of GTP during the formation of the 70S ribosomal complex. The polypeptide is Translation initiation factor IF-2 (Brucella melitensis biotype 1 (strain ATCC 23456 / CCUG 17765 / NCTC 10094 / 16M)).